Consider the following 272-residue polypeptide: Phosphate import ATP-binding protein PstB (272 aa).

The ABC transporter domain occupies 26–267 (LDIKNLDLYY…PSEKQTEDYI (242 aa)). 58-65 (GPSGCGKS) contacts ATP.

This sequence belongs to the ABC transporter superfamily. Phosphate importer (TC 3.A.1.7) family. As to quaternary structure, the complex is composed of two ATP-binding proteins (PstB), two transmembrane proteins (PstC and PstA) and a solute-binding protein (PstS).

It is found in the cell inner membrane. It catalyses the reaction phosphate(out) + ATP + H2O = ADP + 2 phosphate(in) + H(+). Its function is as follows. Part of the ABC transporter complex PstSACB involved in phosphate import. Responsible for energy coupling to the transport system. This Idiomarina loihiensis (strain ATCC BAA-735 / DSM 15497 / L2-TR) protein is Phosphate import ATP-binding protein PstB.